A 247-amino-acid polypeptide reads, in one-letter code: Probable transcriptional regulatory protein GTNG_2524 (247 aa).

Over residues 1–14 (MAGHSKWKNIQRRK) the composition is skewed to basic residues. The disordered stretch occupies residues 1–21 (MAGHSKWKNIQRRKNAQDAKR).

It belongs to the TACO1 family.

Its subcellular location is the cytoplasm. This chain is Probable transcriptional regulatory protein GTNG_2524, found in Geobacillus thermodenitrificans (strain NG80-2).